The sequence spans 367 residues: Mannan endo-1,4-beta-mannosidase (367 aa).

Residues 1–17 form the signal peptide; that stretch reads MLLTALAVLFASTGCQA. Residues tryptophan 79 and asparagine 176 each coordinate substrate. Catalysis depends on glutamate 177, which acts as the Proton donor. A disulfide bridge connects residues cysteine 192 and cysteine 259. Tryptophan 205, tryptophan 240, and tyrosine 279 together coordinate substrate. Residue glutamate 308 is the Nucleophile of the active site. Tryptophan 337 contributes to the substrate binding site.

Monomer. In terms of processing, the disulfide bond between Cys-192 and Cys-259 has not been observed in X-ray crystallography. This may be a consequence of the X-ray radiation.

It carries out the reaction Random hydrolysis of (1-&gt;4)-beta-D-mannosidic linkages in mannans, galactomannans and glucomannans.. Its function is as follows. Hydrolyzes 1,4-beta linked polysaccharide backbones of mannans. Hydrolyzes mannohexaose (M6) preferentially to mannotriose (M4) and less preferentially to mannotetraose (M3), mannopentaose (M5), and mannobiose (M2); hydrolyzes M5 preferentially to M2, and M3, and less preferentially to mannotetraose M4; hydrolyzes M4 preferentially to M3, and less preferentially to mannose (M1), plus very little M2. Does not hydrolyze mannobiose or mannotriose. Does not hydrolyze xlyan, starch, cellulose or galactose. This Mytilus edulis (Blue mussel) protein is Mannan endo-1,4-beta-mannosidase.